A 300-amino-acid polypeptide reads, in one-letter code: MEVGGRKRGKPDGANGAGGKRARESESFQTGVGSKSKPCTKFFSTSGCPFGEGCHFLHHFPGGYQAVAKMTNLGGPAIAPPPGRMPMGNAVPDGPPTPTVKTRLCNKYNTAEGCKWGDKCHFAHGERELGKPMLMDSSMPPPMGPRPTGHFAPPPMPSPAMSTPASFGASATAKISVDASLAGGIIGRGGVNTKQISRVTGAKLAIRDHESDTNLKNIELEGTFDQIKNASAMVRELIVSIGGGAPPQGKKPVGGSHRGGGPGSNFKTKLCENFTKGSCTFGDRCHFAHGENELRKSAAA.

The segment at 1-38 is disordered; sequence MEVGGRKRGKPDGANGAGGKRARESESFQTGVGSKSKP. 2 C3H1-type zinc fingers span residues 33–61 and 99–127; these read GSKS…HHFP and TVKT…HGER. Residues 170–234 form the KH domain; that stretch reads SATAKISVDA…DQIKNASAMV (65 aa). A disordered region spans residues 243 to 262; that stretch reads GGAPPQGKKPVGGSHRGGGP. The C3H1-type 3 zinc finger occupies 265 to 292; sequence NFKTKLCENFTKGSCTFGDRCHFAHGEN.

The sequence is that of Zinc finger CCCH domain-containing protein 14 from Oryza sativa subsp. japonica (Rice).